The primary structure comprises 676 residues: ATP-dependent zinc metalloprotease FTSH 2, chloroplastic (676 aa).

The transit peptide at 1-32 directs the protein to the chloroplast; it reads MAPTSMSLAAKTPLPFSTLPSSGVAQRPVSVT. A helical membrane pass occupies residues 155 to 175; sequence LLFNLIGNLAFPLILIGGLFL. 254–261 lines the ATP pocket; sequence GPPGTGKT. His475 contacts Zn(2+). Glu476 is an active-site residue. Zn(2+) is bound by residues His479 and Asp553.

In the N-terminal section; belongs to the AAA ATPase family. This sequence in the C-terminal section; belongs to the peptidase M41 family. Zn(2+) serves as cofactor.

The protein resides in the plastid. It localises to the chloroplast thylakoid membrane. Probable ATP-dependent zinc metallopeptidase. The sequence is that of ATP-dependent zinc metalloprotease FTSH 2, chloroplastic (FTSH2) from Oryza sativa subsp. japonica (Rice).